The following is a 102-amino-acid chain: Acid shock protein (102 aa).

The signal sequence occupies residues 1–21 (MKKVLGLVVAAAMGLSSAAFA). The span at 22–41 (AETATTPAPTATTTKAAPAK) shows a compositional bias: low complexity. Residues 22–58 (AETATTPAPTATTTKAAPAKTTHHKKQHKAAPAQKAQ) constitute a propeptide that is removed on maturation. The tract at residues 22–102 (AETATTPAPT…PAKPAAQPAA (81 aa)) is disordered. Over residues 80-90 (AAKKHAGKHSH) the composition is skewed to basic residues. Positions 91–102 (QQPAKPAAQPAA) are enriched in low complexity.

The protein belongs to the Asr family. Post-translationally, proteolytic processing gives rise to the active protein.

The protein localises to the periplasm. Its function is as follows. Required for growth and/or survival at acidic conditions. This Escherichia coli (strain SE11) protein is Acid shock protein.